Consider the following 297-residue polypeptide: 4-hydroxy-tetrahydrodipicolinate synthase (297 aa).

Position 47 (Thr47) interacts with pyruvate. Tyr136 functions as the Proton donor/acceptor in the catalytic mechanism. Lys165 acts as the Schiff-base intermediate with substrate in catalysis. A pyruvate-binding site is contributed by Ile206.

The protein belongs to the DapA family. Homotetramer; dimer of dimers.

It localises to the cytoplasm. It carries out the reaction L-aspartate 4-semialdehyde + pyruvate = (2S,4S)-4-hydroxy-2,3,4,5-tetrahydrodipicolinate + H2O + H(+). Its pathway is amino-acid biosynthesis; L-lysine biosynthesis via DAP pathway; (S)-tetrahydrodipicolinate from L-aspartate: step 3/4. Its function is as follows. Catalyzes the condensation of (S)-aspartate-beta-semialdehyde [(S)-ASA] and pyruvate to 4-hydroxy-tetrahydrodipicolinate (HTPA). The polypeptide is 4-hydroxy-tetrahydrodipicolinate synthase (Campylobacter concisus (strain 13826)).